The chain runs to 291 residues: MKRNDPCWCGSNKKWKHCHYPTKPERPLDNLRQLYASRYDIIIKTPEQIEKIRKACQVTAHILDALCEAAKEGVTTNELDLLSRELHKRHNAIPAPLNYGHPPFPKTICTSLNEVICHGIPNDIPLQNGDIMNIDVSCIVDGFYGDCSRMVMIGEVSEIKRKVCEASLEALNAAISILEPNLPLYEIGEVIENCAAKYGFSVVDQFVGHGVGVKFHENPFVAHHRNSCKIPLAPGMIFTIEPMINVGKKEGFIDPINHWEARTCDHQPSAQWEHAILITDSGCEVLTLLDK.

Residue histidine 118 participates in substrate binding. Residues aspartate 135, aspartate 146, and histidine 209 each coordinate a divalent metal cation. Histidine 216 serves as a coordination point for substrate. A divalent metal cation is bound by residues glutamate 241 and glutamate 273.

The protein belongs to the peptidase M24A family. Methionine aminopeptidase type 1 subfamily. Monomer. It depends on Co(2+) as a cofactor. Zn(2+) is required as a cofactor. The cofactor is Mn(2+). Fe(2+) serves as cofactor.

It catalyses the reaction Release of N-terminal amino acids, preferentially methionine, from peptides and arylamides.. Removes the N-terminal methionine from nascent proteins. The N-terminal methionine is often cleaved when the second residue in the primary sequence is small and uncharged (Met-Ala-, Cys, Gly, Pro, Ser, Thr, or Val). Requires deformylation of the N(alpha)-formylated initiator methionine before it can be hydrolyzed. The sequence is that of Methionine aminopeptidase from Chlamydia trachomatis serovar D (strain ATCC VR-885 / DSM 19411 / UW-3/Cx).